We begin with the raw amino-acid sequence, 185 residues long: MTTPNKTPPGADPKQLERTGTVREIGSQAVWSLSSCKPGFGVDQLRDDNLETYWQSDGSQPHLVNIQFRRKTTVKTLCIYADYKSDESYTPSKISVRVGNNFHNLQEIRQLELVEPSGWIHVPLTDNHKKPTRTFMIQIAVLANHQNGRDTHMRQIKIYTPVEESSIGKFPRCTTIDFMMYRSIR.

Thr2 carries the post-translational modification N-acetylthreonine. The DOC domain occupies Thr2–Arg185. An N6-acetyllysine modification is found at Lys169.

The protein belongs to the APC10 family. As to quaternary structure, the mammalian APC/C is composed at least of 14 distinct subunits ANAPC1, ANAPC2, CDC27/APC3, ANAPC4, ANAPC5, CDC16/APC6, ANAPC7, CDC23/APC8, ANAPC10, ANAPC11, CDC26/APC12, ANAPC13, ANAPC15 and ANAPC16 that assemble into a complex of at least 19 chains with a combined molecular mass of around 1.2 MDa; APC/C interacts with FZR1 and FBXO5. The C-terminus of APC10 binds to CDC27/APC3. Interacts with PIWIL1; interaction only takes place when PIWIL1 binds piRNA. Interacts with FBXO43; the interaction is direct.

It participates in protein modification; protein ubiquitination. Component of the anaphase promoting complex/cyclosome (APC/C), a cell cycle-regulated E3 ubiquitin ligase that controls progression through mitosis and the G1 phase of the cell cycle. The APC/C complex acts by mediating ubiquitination and subsequent degradation of target proteins: it mainly mediates the formation of 'Lys-11'-linked polyubiquitin chains and, to a lower extent, the formation of 'Lys-48'- and 'Lys-63'-linked polyubiquitin chains. The APC/C complex catalyzes assembly of branched 'Lys-11'-/'Lys-48'-linked branched ubiquitin chains on target proteins. This Homo sapiens (Human) protein is Anaphase-promoting complex subunit 10 (ANAPC10).